The chain runs to 1406 residues: DNA-directed RNA polymerase subunit beta' (1406 aa).

Residues Cys-72, Cys-74, Cys-87, and Cys-90 each contribute to the Zn(2+) site. 3 residues coordinate Mg(2+): Asp-462, Asp-464, and Asp-466. Positions 816, 889, 896, and 899 each coordinate Zn(2+).

Belongs to the RNA polymerase beta' chain family. As to quaternary structure, the RNAP catalytic core consists of 2 alpha, 1 beta, 1 beta' and 1 omega subunit. When a sigma factor is associated with the core the holoenzyme is formed, which can initiate transcription. The cofactor is Mg(2+). Zn(2+) is required as a cofactor.

It carries out the reaction RNA(n) + a ribonucleoside 5'-triphosphate = RNA(n+1) + diphosphate. In terms of biological role, DNA-dependent RNA polymerase catalyzes the transcription of DNA into RNA using the four ribonucleoside triphosphates as substrates. In Psychrobacter sp. (strain PRwf-1), this protein is DNA-directed RNA polymerase subunit beta'.